The primary structure comprises 273 residues: Testis-specific serine/threonine-protein kinase 6 (273 aa).

Positions 12-267 constitute a Protein kinase domain; the sequence is YKLGRTIGEG…AGQVARNGWL (256 aa). ATP is bound by residues 18–26 and K41; that span reads IGEGSYSKV. D135 acts as the Proton acceptor in catalysis.

Belongs to the protein kinase superfamily. CAMK Ser/Thr protein kinase family. As to quaternary structure, microtubule inner protein component of sperm flagellar doublet microtubules. Interacts with HSP90; this interaction stabilizes and activates TSSK6. Interacts with the heat shock proteins HSPCB, HSPA8 and HSPA1A. These interactions appear to be required for TSSK6 kinase activity. Interacts with TSACC; this interaction is direct and recruits TSACC to HSP90, which is essential for kinase activity. Requires Mg(2+) as cofactor. Autophosphorylated. In terms of processing, ubiquitinated; HSP90 activity negatively regulates ubiquitination and degradation. In terms of tissue distribution, expressed in the testis, localized to the heads of elongating spermatids.

It localises to the cytoplasm. It is found in the cytoskeleton. Its subcellular location is the flagellum axoneme. The protein localises to the nucleus. It carries out the reaction L-seryl-[protein] + ATP = O-phospho-L-seryl-[protein] + ADP + H(+). It catalyses the reaction L-threonyl-[protein] + ATP = O-phospho-L-threonyl-[protein] + ADP + H(+). Its function is as follows. Serine/threonine-protein kinase component of the sperm flagellar doublet microtubules. May act as a regulator of sperm motility by mediating phosphorylation of sperm doublet microtubule proteins. Plays a role in DNA condensation during postmeiotic chromatin remodeling and histone-to-protamine transition during spermatogenesis. The polypeptide is Testis-specific serine/threonine-protein kinase 6 (Mus musculus (Mouse)).